The chain runs to 794 residues: Lon protease (794 aa).

The region spanning 29-222 (VPLLPLRGVL…TLISIIQDEQ (194 aa)) is the Lon N-terminal domain. Position 374–381 (374–381 (GPPGVGKT)) interacts with ATP. The region spanning 610 to 791 (TDQVGMATGL…DEVLEHALVG (182 aa)) is the Lon proteolytic domain. Active-site residues include Ser697 and Lys740.

This sequence belongs to the peptidase S16 family. As to quaternary structure, homohexamer. Organized in a ring with a central cavity.

It is found in the cytoplasm. It carries out the reaction Hydrolysis of proteins in presence of ATP.. ATP-dependent serine protease that mediates the selective degradation of mutant and abnormal proteins as well as certain short-lived regulatory proteins. Required for cellular homeostasis and for survival from DNA damage and developmental changes induced by stress. Degrades polypeptides processively to yield small peptide fragments that are 5 to 10 amino acids long. Binds to DNA in a double-stranded, site-specific manner. In Bacillus thuringiensis (strain Al Hakam), this protein is Lon protease.